The chain runs to 823 residues: MGKKRTKGKTVPIDDSSETLEPVCRHIRKGLEQGNLKKALVNVEWNICQDCKTDNKVKDKAEEETEEKPSVWLCLKCGHQGCGRNSQEQHALKHYLTPRSEPHCLVLSLDNWSVWCYVCDNEVQYCSSNQLGQVVDYVRKQASITTPKPAEKDNGNIELENKKLEKESKNEQEREKKENMAKENPPMNSPCQITVKGLSNLGNTCFFNAVMQNLSQTPVLRELLKEVKMSGTIVKIEPPDLALTEPLEINLEPPGPLTLAMSQFLNEMQETKKGVVTPKELFSQVCKKAVRFKGYQQQDSQELLRYLLDGMRAEEHQRVSKGILKAFGNSTEKLDEELKNKVKDYEKKKSMPSFVDRIFGGELTSMIMCDQCRTVSLVHESFLDLSLPVLDDQSGKKSVNDKNLKKTVEDEDQDSEEEKDNDSYIKERSDIPSGTSKHLQKKAKKQAKKQAKNQRRQQKIQGKVLHLNDICTIDHPEDSEYEAEMSLQGEVNIKSNHISQEGVMHKEYCVNQKDLNGQAKMIESVTDNQKSTEEVDMKNINMDNDLEVLTSSPTRNLNGAYLTEGSNGEVDISNGFKNLNLNAALHPDEINIEILNDSHTPGTKVYEVVNEDPETAFCTLANREVFNTDECSIQHCLYQFTRNEKLRDANKLLCEVCTRRQCNGPKANIKGERKHVYTNAKKQMLISLAPPVLTLHLKRFQQAGFNLRKVNKHIKFPEILDLAPFCTLKCKNVAEENTRVLYSLYGVVEHSGTMRSGHYTAYAKARTANSHLSNLVLHGDIPQDFEMESKGQWFHISDTHVQAVPTTKVLNSQAYLLFYERIL.

A UBP-type zinc finger spans residues 22-142 (PVCRHIRKGL…QVVDYVRKQA (121 aa)). Residues Cys-24, His-26, Cys-48, Cys-51, Cys-74, Cys-77, Cys-82, His-90, His-94, His-103, Cys-116, and Cys-119 each coordinate Zn(2+). A Glycyl lysine isopeptide (Lys-Gly) (interchain with G-Cter in SUMO2) cross-link involves residue Lys-140. Positions 146-189 (TPKPAEKDNGNIELENKKLEKESKNEQEREKKENMAKENPPMNS) are disordered. Over residues 149-181 (PAEKDNGNIELENKKLEKESKNEQEREKKENMA) the composition is skewed to basic and acidic residues. Phosphoserine is present on Ser-189. The USP domain occupies 196–822 (KGLSNLGNTC…QAYLLFYERI (627 aa)). Cys-205 (nucleophile) is an active-site residue. The span at 394–408 (SGKKSVNDKNLKKTV) shows a compositional bias: basic and acidic residues. Residues 394 to 460 (SGKKSVNDKN…AKNQRRQQKI (67 aa)) form a disordered region. Residues 409 to 420 (EDEDQDSEEEKD) are compositionally biased toward acidic residues. Ser-415 is subject to Phosphoserine. A compositionally biased stretch (basic and acidic residues) spans 421 to 430 (NDSYIKERSD). Residues 438–458 (HLQKKAKKQAKKQAKNQRRQQ) are compositionally biased toward basic residues. Phosphoserine occurs at positions 531 and 552. Thr-554 bears the Phosphothreonine mark. His-758 (proton acceptor) is an active-site residue.

This sequence belongs to the peptidase C19 family. USP16 subfamily. In terms of assembly, homotetramer. Associates with late pre-40S ribosomes. Interacts with CEP78; promoting deubiquitination of tektins. Phosphorylated at the onset of mitosis and dephosphorylated during the metaphase/anaphase transition. Phosphorylation by AURKB enhances the deubiquitinase activity. As to expression, present in all the tissues examined including fetal brain, lung, liver, kidney, and adult heart, brain, placenta, lung, liver, skeletal muscle, kidney and pancreas.

Its subcellular location is the nucleus. The protein localises to the cytoplasm. The catalysed reaction is Thiol-dependent hydrolysis of ester, thioester, amide, peptide and isopeptide bonds formed by the C-terminal Gly of ubiquitin (a 76-residue protein attached to proteins as an intracellular targeting signal).. Functionally, specifically deubiquitinates 'Lys-120' of histone H2A (H2AK119Ub), a specific tag for epigenetic transcriptional repression, thereby acting as a coactivator. Deubiquitination of histone H2A is a prerequisite for subsequent phosphorylation at 'Ser-11' of histone H3 (H3S10ph), and is required for chromosome segregation when cells enter into mitosis. In resting B- and T-lymphocytes, phosphorylation by AURKB leads to enhance its activity, thereby maintaining transcription in resting lymphocytes. Regulates Hox gene expression via histone H2A deubiquitination. Prefers nucleosomal substrates. Does not deubiquitinate histone H2B. Also deubiquitinates non-histone proteins, such as ribosomal protein RPS27A: deubiquitination of monoubiquitinated RPS27A promotes maturation of the 40S ribosomal subunit. Also mediates deubiquitination of tektin proteins (TEKT1, TEKT2, TEK3, TEKT4 and TEKT5), promoting their stability. This chain is Ubiquitin carboxyl-terminal hydrolase 16, found in Homo sapiens (Human).